The chain runs to 210 residues: Thymidylate kinase (210 aa).

9–16 (GLEGAGKS) provides a ligand contact to ATP.

This sequence belongs to the thymidylate kinase family.

It catalyses the reaction dTMP + ATP = dTDP + ADP. Functionally, phosphorylation of dTMP to form dTDP in both de novo and salvage pathways of dTTP synthesis. This Aliivibrio salmonicida (strain LFI1238) (Vibrio salmonicida (strain LFI1238)) protein is Thymidylate kinase.